The following is a 251-amino-acid chain: Zinc import ATP-binding protein ZnuC (251 aa).

Residues 5 to 220 (VSLENVSVSF…PEFISMFGPR (216 aa)) form the ABC transporter domain. 37 to 44 (GPNGAGKS) provides a ligand contact to ATP.

It belongs to the ABC transporter superfamily. Zinc importer (TC 3.A.1.15.5) family. As to quaternary structure, the complex is composed of two ATP-binding proteins (ZnuC), two transmembrane proteins (ZnuB) and a solute-binding protein (ZnuA).

Its subcellular location is the cell inner membrane. It carries out the reaction Zn(2+)(out) + ATP(in) + H2O(in) = Zn(2+)(in) + ADP(in) + phosphate(in) + H(+)(in). Part of the ABC transporter complex ZnuABC involved in zinc import. Responsible for energy coupling to the transport system. The sequence is that of Zinc import ATP-binding protein ZnuC from Salmonella typhi.